Here is a 919-residue protein sequence, read N- to C-terminus: MSHHVPNLYGTPIRDPHERKRNSASMGEVNQSVSSRNCERGSEKGTKQRKKASRACDQCRRKRIKCRFDKHTGVCQGCLEVGEKCQFIRVPLKRGPAKKRASVVSIEKFSSDNDPLQYRPRTHSYPMNSGNNYLPSLARNSSFPSISSLFVPSITAQSQQFVKVPYDDIKRRSSLATLGSDSSISTEFGGNYRLDENLNVRQEGKDIVAKGMITPVEEMGACSSNVRRQGSQSLPIQEQRASPYINPFISGRSRLSSLSYTSEATTSEGNTQGKNQCMLTPNSVRSIEKERLNSLTAGCPNKKLGTDGRSDKWDKNSTWKPVYRSSNPSHPSTEKNVSLNQEASAKPLMLGTYRQFDATSFYKVLGIYYNFFHINFPVIPINKSKFTDMLDPEKPNVIDEIRQINNEIIQCFKTALEVLVFCKIKQRRSSKSTKSWSRDSLCDFQKGLYYIQNFNKCIADCFQSLITIKPVLKQNSSVIPSRIKFIYFSTIIVLNFILILAGEESSLLLGPSVGVFNEFQAHKLFLPFENTSPMLLLNSNEESGDEILDYAVLFKRLYILLNILDTLQSFRLGQPKLINLNFGSAIETYFSDKTGHNQVVEKAPVALDNILRNLKLGEFITYFVLNRKSLQVNVPHHLLFTNQTDYGEFAVEKGEHDNIAGKFETLLKKKEILIRKLLNIEQKNDHILENCCNSDAEMKNIGELVCSMITLVSGILDSITNMNAENSVDLDSKPLPNAYFAQDSEEELMSPTQSITSNLASEENTRCTTKDLMGTVSIFMLPMVEECYNIISLIGPIPTTLISLYIRNGNMAKGINDRIMTLSTALNELVQITALFNTLEPFRKNAHDRAKRYYVSATSSTGCYESVMKSMYSGKCAASNASNVAPSEEENKKILKKFADIGWKLMDDSELGCCCCFFN.

Residues 1–54 (MSHHVPNLYGTPIRDPHERKRNSASMGEVNQSVSSRNCERGSEKGTKQRKKASR) are disordered. Positions 23–36 (SASMGEVNQSVSSR) are enriched in polar residues. Basic and acidic residues predominate over residues 37–46 (NCERGSEKGT). The segment at residues 56-85 (CDQCRRKRIKCRFDKHTGVCQGCLEVGEKC) is a DNA-binding region (zn(2)-C6 fungal-type). Residues 297–338 (AGCPNKKLGTDGRSDKWDKNSTWKPVYRSSNPSHPSTEKNVS) are disordered. Residues 304–317 (LGTDGRSDKWDKNS) show a composition bias toward basic and acidic residues. A compositionally biased stretch (polar residues) spans 318–338 (TWKPVYRSSNPSHPSTEKNVS).

In terms of assembly, binds DNA in a sequence-specific manner.

The protein localises to the nucleus. The polypeptide is Transcriptional regulatory protein EDS1 (EDS1) (Saccharomyces cerevisiae (strain RM11-1a) (Baker's yeast)).